Here is a 394-residue protein sequence, read N- to C-terminus: Phosphopentomutase (394 aa).

Mn(2+) is bound by residues D15, D288, H293, D329, H330, and H341.

This sequence belongs to the phosphopentomutase family. Requires Mn(2+) as cofactor.

It is found in the cytoplasm. It carries out the reaction 2-deoxy-alpha-D-ribose 1-phosphate = 2-deoxy-D-ribose 5-phosphate. It catalyses the reaction alpha-D-ribose 1-phosphate = D-ribose 5-phosphate. It functions in the pathway carbohydrate degradation; 2-deoxy-D-ribose 1-phosphate degradation; D-glyceraldehyde 3-phosphate and acetaldehyde from 2-deoxy-alpha-D-ribose 1-phosphate: step 1/2. In terms of biological role, isomerase that catalyzes the conversion of deoxy-ribose 1-phosphate (dRib-1-P) and ribose 1-phosphate (Rib-1-P) to deoxy-ribose 5-phosphate (dRib-5-P) and ribose 5-phosphate (Rib-5-P), respectively. The sequence is that of Phosphopentomutase from Bacillus licheniformis (strain ATCC 14580 / DSM 13 / JCM 2505 / CCUG 7422 / NBRC 12200 / NCIMB 9375 / NCTC 10341 / NRRL NRS-1264 / Gibson 46).